The primary structure comprises 470 residues: Cysteine--tRNA ligase (470 aa).

Zn(2+) is bound at residue Cys-46. Positions 48–58 match the 'HIGH' region motif; sequence PTVYDLAHIGN. Cys-230, His-255, and Glu-259 together coordinate Zn(2+). Positions 288–292 match the 'KMSKS' region motif; the sequence is KMSKS. Residue Lys-291 participates in ATP binding.

Belongs to the class-I aminoacyl-tRNA synthetase family. In terms of assembly, monomer. Zn(2+) is required as a cofactor.

The protein localises to the cytoplasm. The enzyme catalyses tRNA(Cys) + L-cysteine + ATP = L-cysteinyl-tRNA(Cys) + AMP + diphosphate. The chain is Cysteine--tRNA ligase from Granulibacter bethesdensis (strain ATCC BAA-1260 / CGDNIH1).